A 239-amino-acid polypeptide reads, in one-letter code: Probable transcriptional regulatory protein Ajs_1898 (239 aa).

The tract at residues 1–21 (MAGHSKWANIQHRKGRQDEKR) is disordered.

This sequence belongs to the TACO1 family.

Its subcellular location is the cytoplasm. The chain is Probable transcriptional regulatory protein Ajs_1898 from Acidovorax sp. (strain JS42).